Consider the following 156-residue polypeptide: Cyanate hydratase (156 aa).

Catalysis depends on residues R96, E99, and S122.

The protein belongs to the cyanase family.

It catalyses the reaction cyanate + hydrogencarbonate + 3 H(+) = NH4(+) + 2 CO2. Functionally, catalyzes the reaction of cyanate with bicarbonate to produce ammonia and carbon dioxide. The polypeptide is Cyanate hydratase (Escherichia coli (strain K12 / DH10B)).